Here is a 744-residue protein sequence, read N- to C-terminus: MTISNLIRSRCSLAAAKSFLENVKSFSSHATFAEHKQLEKIRNIGISAHIDSGKTTLTERILFYTGRIKEMHEVKGKDNVGATMDSMELERQRGITIQSAATYTIWKDHNINIIDTPGHVDFTVEVERALRVLDGAVLVLCSVGGVQSQTLTVNRQMKRYNVPCLAFINKLDRSGANPYRVLGQMRSKLNHNAAFVQLPIGVESNCKGVIDLVKQRALYFEEPYGLKIREDEIPADMRTESAERRQELIEHLSNVDEKIGELFLEEREATVEDIMGAIRRSTLKRAFTPVLVGTALKNKGVQPLLDAVLDYLPHPGEVENVALVEKKDEEPQKVPLNPARDGKDPFVGLAFKLEAGRFGQLTYLRCYQGVLRKGDNIFNTRSGKKIRLARLVRLHSNQMEDVNEVYAGDIFALFGVDCASGDTFVTNPKLELSMESIFVPDPVVSMAIKPTNSKDRDNFAKAIARFTKEDPTFHFEYDADVKETLVSGMGELHLEIYAQRMEREYNCPVTLGKPKVAFRETLIGPCEFDYLHKKQSGGQGQYARVSGILEPLPPHQNTTIEFVDETMGTNVPKQFIPGIEKGFRQMAEKGLLSGHKLSGIKFRLQDGAHHIVDSSELAFMLAAQGAIKSVFENGSWQILEPIMMVEVTAPEEFQGTVIGQLNKRHGIITGTEGAEGWFTVYAEVPLNDMFGYAGELRSSTQGKGEFSMEYSRYSPCMPEVQEKLCHEYQVSQGLVVDKKQKKKN.

Residues 1 to 33 (MTISNLIRSRCSLAAAKSFLENVKSFSSHATFA) constitute a mitochondrion transit peptide. The tr-type G domain occupies 39–317 (EKIRNIGISA…VLDYLPHPGE (279 aa)). GTP-binding positions include 48–55 (AHIDSGKT), 115–119 (DTPGH), and 169–172 (NKLD).

Belongs to the TRAFAC class translation factor GTPase superfamily. Classic translation factor GTPase family. EF-G/EF-2 subfamily.

The protein localises to the mitochondrion. It participates in protein biosynthesis; polypeptide chain elongation. Mitochondrial GTPase that catalyzes the GTP-dependent ribosomal translocation step during translation elongation. During this step, the ribosome changes from the pre-translocational (PRE) to the post-translocational (POST) state as the newly formed A-site-bound peptidyl-tRNA and P-site-bound deacylated tRNA move to the P and E sites, respectively. Catalyzes the coordinated movement of the two tRNA molecules, the mRNA and conformational changes in the ribosome. This Anopheles gambiae (African malaria mosquito) protein is Elongation factor G, mitochondrial.